We begin with the raw amino-acid sequence, 513 residues long: DNA damage-binding protein CMR1 (513 aa).

Residues 35–45 (RSEAGIEDHRK) show a composition bias toward basic and acidic residues. The disordered stretch occupies residues 35–103 (RSEAGIEDHR…TAQNVKQEEE (69 aa)). WD repeat units follow at residues 183 to 224 (IVHE…PDPE), 237 to 277 (LFSR…SDEL), 329 to 369 (LSDK…AKPD), 386 to 425 (NSRL…PSEL), 438 to 477 (GRWV…LSHL), and 478 to 513 (ETST…APQE).

This sequence belongs to the WD repeat DDB2/WDR76 family.

In terms of biological role, DNA-binding protein that binds to both single- and double-stranded DNA. Binds preferentially to UV-damaged DNA. May be involved in DNA-metabolic processes. This Eremothecium gossypii (strain ATCC 10895 / CBS 109.51 / FGSC 9923 / NRRL Y-1056) (Yeast) protein is DNA damage-binding protein CMR1.